The sequence spans 319 residues: Urease accessory protein UreD (319 aa).

The tract at residues 298–319 (QEQPLPPSSFKTNTAVPAVRTH) is disordered.

It belongs to the UreD family. UreD, UreF and UreG form a complex that acts as a GTP-hydrolysis-dependent molecular chaperone, activating the urease apoprotein by helping to assemble the nickel containing metallocenter of UreC. The UreE protein probably delivers the nickel.

Its subcellular location is the cytoplasm. Functionally, required for maturation of urease via the functional incorporation of the urease nickel metallocenter. This chain is Urease accessory protein UreD, found in Synechococcus sp. (strain WH7805).